The following is a 351-amino-acid chain: Beta-hexosaminidase (351 aa).

Substrate is bound by residues aspartate 62, arginine 70, arginine 134, and 164–165 (KH). Histidine 177 acts as the Proton donor/acceptor in catalysis. The Nucleophile role is filled by aspartate 249.

The protein belongs to the glycosyl hydrolase 3 family. NagZ subfamily.

It is found in the cytoplasm. It carries out the reaction Hydrolysis of terminal non-reducing N-acetyl-D-hexosamine residues in N-acetyl-beta-D-hexosaminides.. Its pathway is cell wall biogenesis; peptidoglycan recycling. Functionally, plays a role in peptidoglycan recycling by cleaving the terminal beta-1,4-linked N-acetylglucosamine (GlcNAc) from peptide-linked peptidoglycan fragments, giving rise to free GlcNAc, anhydro-N-acetylmuramic acid and anhydro-N-acetylmuramic acid-linked peptides. In Histophilus somni (strain 129Pt) (Haemophilus somnus), this protein is Beta-hexosaminidase.